The chain runs to 773 residues: DNA gyrase subunit B (773 aa).

In terms of domain architecture, Toprim spans 416–530 (SEIFLVEGDS…QGHVYIAQAP (115 aa)). The Mg(2+) site is built by E422, D495, and D497.

This sequence belongs to the type II topoisomerase GyrB family. As to quaternary structure, heterotetramer, composed of two GyrA and two GyrB chains. In the heterotetramer, GyrA contains the active site tyrosine that forms a transient covalent intermediate with DNA, while GyrB binds cofactors and catalyzes ATP hydrolysis. Mg(2+) is required as a cofactor. Requires Mn(2+) as cofactor. Ca(2+) serves as cofactor.

The protein localises to the cytoplasm. It carries out the reaction ATP-dependent breakage, passage and rejoining of double-stranded DNA.. Its function is as follows. A type II topoisomerase that negatively supercoils closed circular double-stranded (ds) DNA in an ATP-dependent manner to modulate DNA topology and maintain chromosomes in an underwound state. Negative supercoiling favors strand separation, and DNA replication, transcription, recombination and repair, all of which involve strand separation. Also able to catalyze the interconversion of other topological isomers of dsDNA rings, including catenanes and knotted rings. Type II topoisomerases break and join 2 DNA strands simultaneously in an ATP-dependent manner. The protein is DNA gyrase subunit B of Helicobacter pylori (strain ATCC 700392 / 26695) (Campylobacter pylori).